We begin with the raw amino-acid sequence, 177 residues long: Large ribosomal subunit protein uL6 (177 aa).

It belongs to the universal ribosomal protein uL6 family. In terms of assembly, part of the 50S ribosomal subunit.

Functionally, this protein binds to the 23S rRNA, and is important in its secondary structure. It is located near the subunit interface in the base of the L7/L12 stalk, and near the tRNA binding site of the peptidyltransferase center. The sequence is that of Large ribosomal subunit protein uL6 from Laribacter hongkongensis (strain HLHK9).